A 148-amino-acid chain; its full sequence is uncharacterized protein (148 aa).

The disordered stretch occupies residues 38-99; it reads QFRRHHHAEH…RRHLRKGHLK (62 aa). The segment covering 64–82 has biased composition (basic and acidic residues); sequence FHHDGGRHGHATRIHENNR. The span at 83-99 shows a compositional bias: basic residues; the sequence is RPHKRNRRRHLRKGHLK.

This is an uncharacterized protein from Fowl adenovirus A serotype 1 (strain CELO / Phelps) (FAdV-1).